The sequence spans 539 residues: Chaperone Ric-8A (539 aa).

The tract at residues 506-539 (PMGVTSDGRLGPLDEAAQKMLQRQESSDLDSDSD) is disordered.

The protein belongs to the synembryn family.

Its subcellular location is the cytoplasm. It is found in the cell cortex. Functionally, chaperone that specifically binds and folds nascent G alpha proteins prior to G protein heterotrimer formation, promoting their stability and activity: folds GNAI1, GNAO1, GNA13 and GNAQ. Does not fold G(s) G-alpha proteins GNAS nor GNAL. Also acts as a guanine nucleotide exchange factor (GEF) for G alpha proteins by stimulating exchange of bound GDP for free GTP. The sequence is that of Chaperone Ric-8A (ric8a) from Xenopus laevis (African clawed frog).